A 273-amino-acid chain; its full sequence is MGKLLRKPLNERIAPGVTLVQDINQANSPLSYVGFRLIEMEKGAIYQEELTELECCIVALTGKITVSEGNDIFPEIGTRANVFEKIPTDSVFISGGRAFQVKADTEKARVALCYSPANQDLPTTLIKASDNSIEQRGKYQNKRLVHNILPDVSEVASSLLVVEVYTNGGNFSSYPPHKHDRDNLPAESLLEESYYHEINPEQGFIFQRVYTDERTLDETMAVEHQNAVIVPEGYHPVGVPDGYDSYYLNVMAGPNRVWKFHNDPDHEWILERD.

Belongs to the isomerase IolB family.

The enzyme catalyses 5-deoxy-D-glucuronate = 5-dehydro-2-deoxy-D-gluconate. It functions in the pathway polyol metabolism; myo-inositol degradation into acetyl-CoA; acetyl-CoA from myo-inositol: step 4/7. Its function is as follows. Involved in the isomerization of 5-deoxy-glucuronate (5DG) to 5-dehydro-2-deoxy-D-gluconate (DKG or 2-deoxy-5-keto-D-gluconate). The protein is 5-deoxy-glucuronate isomerase of Listeria monocytogenes serotype 4a (strain HCC23).